The chain runs to 149 residues: Large ribosomal subunit protein bL9 (149 aa).

This sequence belongs to the bacterial ribosomal protein bL9 family.

Its function is as follows. Binds to the 23S rRNA. The chain is Large ribosomal subunit protein bL9 from Syntrophus aciditrophicus (strain SB).